We begin with the raw amino-acid sequence, 399 residues long: Cytochrome P450 FAS1 (399 aa).

Residue cysteine 349 participates in heme binding.

Belongs to the cytochrome P450 family. Requires heme as cofactor.

It localises to the cytoplasm. In terms of biological role, may be involved in the biosynthesis of cytokinin phytohormones and in host plant fasciation (leafy gall). In Rhodococcoides fascians (Rhodococcus fascians), this protein is Cytochrome P450 FAS1 (fas1).